A 311-amino-acid polypeptide reads, in one-letter code: MSKFLVFGHRNPDTDAIASSYGWAHLEREVFGRDAEAVVLGTPNEETAFALDYFGVTAPRVVESAKAEGVSQVILTDHNEFQQSIADIKEVEVAAVIDHHRVANFETANPLYMRLEPVGSASSIVYRAFKENGVIPPKEVAGLLLSGLISDTLLLKSPTTHVTDPQVAAELAEIAGVNLEEYGLALLKAGTNLASKSAEELIDIDAKTFGLNGNDVRVAQVNTVDIAEVLERQAEIEAAMTAASVANGYSDFVLMITDIVNSNSEILALGSNMDKVEAAFNFKLENNHAFLAGAVSRKKQVVPQLTDAFNA.

Positions 9, 13, 15, 77, 99, and 151 each coordinate Mn(2+).

It belongs to the PPase class C family. Mn(2+) is required as a cofactor.

It is found in the cytoplasm. It carries out the reaction diphosphate + H2O = 2 phosphate + H(+). The chain is Probable manganese-dependent inorganic pyrophosphatase from Streptococcus suis (strain 98HAH33).